Here is a 320-residue protein sequence, read N- to C-terminus: Calnexin-independence factor 1 (320 aa).

The segment at S16–E36 is disordered.

Its subcellular location is the nucleus. It localises to the nucleolus. Induces a stably inheritable state of calnexin independence called the Cin state when overexpressed. In Schizosaccharomyces pombe (strain 972 / ATCC 24843) (Fission yeast), this protein is Calnexin-independence factor 1 (cif1).